A 160-amino-acid polypeptide reads, in one-letter code: Cyclic pyranopterin monophosphate synthase (160 aa).

Residues 77–79 (MCH) and 114–115 (ME) each bind substrate. Residue Asp-129 is part of the active site.

This sequence belongs to the MoaC family. In terms of assembly, homohexamer; trimer of dimers.

It carries out the reaction (8S)-3',8-cyclo-7,8-dihydroguanosine 5'-triphosphate = cyclic pyranopterin phosphate + diphosphate. Its pathway is cofactor biosynthesis; molybdopterin biosynthesis. In terms of biological role, catalyzes the conversion of (8S)-3',8-cyclo-7,8-dihydroguanosine 5'-triphosphate to cyclic pyranopterin monophosphate (cPMP). The protein is Cyclic pyranopterin monophosphate synthase of Listeria innocua serovar 6a (strain ATCC BAA-680 / CLIP 11262).